Here is a 237-residue protein sequence, read N- to C-terminus: 1-(5-phosphoribosyl)-5-[(5-phosphoribosylamino)methylideneamino] imidazole-4-carboxamide isomerase (237 aa).

The Proton acceptor role is filled by aspartate 8. Aspartate 129 acts as the Proton donor in catalysis.

Belongs to the HisA/HisF family.

It is found in the cytoplasm. It carries out the reaction 1-(5-phospho-beta-D-ribosyl)-5-[(5-phospho-beta-D-ribosylamino)methylideneamino]imidazole-4-carboxamide = 5-[(5-phospho-1-deoxy-D-ribulos-1-ylimino)methylamino]-1-(5-phospho-beta-D-ribosyl)imidazole-4-carboxamide. Its pathway is amino-acid biosynthesis; L-histidine biosynthesis; L-histidine from 5-phospho-alpha-D-ribose 1-diphosphate: step 4/9. The chain is 1-(5-phosphoribosyl)-5-[(5-phosphoribosylamino)methylideneamino] imidazole-4-carboxamide isomerase from Roseiflexus sp. (strain RS-1).